The sequence spans 387 residues: Hydroxycarboxylic acid receptor 3 (387 aa).

Residues 1–28 are Extracellular-facing; that stretch reads MNRHHLQDHFLEIDKKNCCVFRDDFIAK. A helical membrane pass occupies residues 29-50; the sequence is VLPPVLGLEFIFGLLGNGLALW. Residues 51–63 are Cytoplasmic-facing; the sequence is IFCFHLKSWKSSR. A helical membrane pass occupies residues 64–85; that stretch reads IFLFNLAVADFLLIICLPFVMD. At 86–102 the chain is on the extracellular side; that stretch reads YYVRRSDWKFGDIPCRL. Cysteines 100 and 177 form a disulfide. Residues 103 to 123 form a helical membrane-spanning segment; sequence VLFMFAMNRQGSIIFLTVVAV. The Cytoplasmic segment spans residues 124–142; the sequence is DRYFRVVHPHHALNKISNW. The chain crosses the membrane as a helical span at residues 143–163; that stretch reads TAAIISCLLWGITVGLTVHLL. Topologically, residues 164-194 are extracellular; sequence KKKLLIQNGTANVCISFSICHTFRWHEAMFL. The helical transmembrane segment at 195–209 threads the bilayer; that stretch reads LEFFLPLGIILFCSA. The Cytoplasmic portion of the chain corresponds to 210–236; the sequence is RIIWSLRQRQMDRHAKIKRAITFIMVV. A helical transmembrane segment spans residues 237–256; it reads AIVFVICFLPSVVVRIHIFW. Residues 257 to 273 lie on the Extracellular side of the membrane; it reads LLHTSGTQNCEVYRSVD. The chain crosses the membrane as a helical span at residues 274–298; that stretch reads LAFFITLSFTYMNSMLDPVVYYFSS. The Cytoplasmic portion of the chain corresponds to 299–387; that stretch reads PSFPNFFSTL…LEKQLGCCIE (89 aa). Positions 319–343 are disordered; that stretch reads GEPDNNRSTSVELTGDPNKTRGAPE.

This sequence belongs to the G-protein coupled receptor 1 family. Expression largely restricted to adipose tissue and spleen.

The protein localises to the cell membrane. Receptor for 3-OH-octanoid acid mediates a negative feedback regulation of adipocyte lipolysis to counteract prolipolytic influences under conditions of physiological or pathological increases in beta-oxidation rates. Acts as a low affinity receptor for nicotinic acid. This pharmacological effect requires nicotinic acid doses that are much higher than those provided by a normal diet. The sequence is that of Hydroxycarboxylic acid receptor 3 (HCAR3) from Homo sapiens (Human).